The primary structure comprises 97 residues: UstYa family oxidase VicYc (97 aa).

Short sequence motifs (HXXHC) lie at residues 11–15 (HELHC) and 38–42 (HANHC).

Belongs to the ustYa family.

The protein operates within mycotoxin biosynthesis. Its function is as follows. UstYa family oxidase, part of the gene cluster that mediates the biosynthesis of the secondary metabolite victorin, the molecular basis for Victoria blight of oats. The role of vicYc within the pathway has still to be determined. The pathway starts with the processing of the precursor vicA1 by several endopeptidases including kexin proteases as well as the cluster-specific S28 family peptidases vicPa and vicPb to produce 7 identical copies of the hexapeptide Gly-Leu-Lys-Leu-Ala-Phe. After being excised from the precursor peptide, the core peptides are cyclized and modified post-translationally by enzymes encoded within the gene cluster. The ustYa family oxidase vicYb is required for the formation of the macrocycle in victorin and the copper amine oxidases (CAOs) vicK1 and vicK2 are responsible for converting victorin to the active form by oxidizing the N-terminal glycyl residue in the peptides to glyoxylate. Relaxed substrate specificity of enzymes in the victorin biosynthetic pathway results in a metabolic grid that produces a set of analogs including victorinines B, C, E or HV-toxin M. This chain is UstYa family oxidase VicYc, found in Bipolaris victoriae (strain FI3) (Victoria blight of oats agent).